The chain runs to 716 residues: ATP-dependent zinc metalloprotease FTSH 1, chloroplastic (716 aa).

Residues 1-48 (MASNSLLRSSSNFFLGSHIIISSPTPKTTRKPSFPFSFVSRAKYQITR) constitute a chloroplast transit peptide. The transit peptide at 49 to 86 (SSQDENSPNGKPNSPFSSQVALAAILLSSISSSPLALA) directs the protein to the thylakoid. A helical membrane pass occupies residues 204–224 (FTVIGNLIFPLLAFGGLFLLF). An ATP-binding site is contributed by 302 to 309 (GPPGTGKT). His-524 is a binding site for Zn(2+). Glu-525 is an active-site residue. Zn(2+) is bound by residues His-528 and Asp-605.

The protein in the N-terminal section; belongs to the AAA ATPase family. This sequence in the C-terminal section; belongs to the peptidase M41 family. As to quaternary structure, interacts with CHIP and HSP70. Heterohexamers with FTSH2, FTSH5 and FTSH8. The cofactor is Zn(2+). The FTSH1 precursor is ubiquitinated by CHIP in the cytoplasm. In terms of tissue distribution, ubiquitous.

It localises to the plastid. The protein localises to the chloroplast thylakoid membrane. Part of a complex that function as an ATP-dependent zinc metallopeptidase. Involved in the thylakoid formation and in the removal of damaged D1 in the photosystem II, preventing cell death under high-intensity light conditions. In Arabidopsis thaliana (Mouse-ear cress), this protein is ATP-dependent zinc metalloprotease FTSH 1, chloroplastic (FTSH1).